The chain runs to 312 residues: R2-like ligand binding oxidase (312 aa).

Mn(2+) contacts are provided by glutamate 68, glutamate 101, and histidine 104. The segment at residues 71–162 (VTQDIQPFMA…AAQVRASATY (92 aa)) is a cross-link (3-(O4'-tyrosyl)-valine (Val-Tyr)). Glutamate 101 lines the Fe cation pocket. Positions 167, 202, and 205 each coordinate Fe cation.

This sequence belongs to the ribonucleoside diphosphate reductase small chain family. R2-like ligand binding oxidase subfamily. In terms of assembly, homodimer. The cofactor is Fe cation. Mn(2+) serves as cofactor.

Its function is as follows. Probable oxidase that might be involved in lipid metabolism. This is R2-like ligand binding oxidase from Mycobacterium sp. (strain JLS).